The following is a 332-amino-acid chain: Peroxidase C1C (332 aa).

The first 9 residues, 1-9 (MLHASFSNA), serve as a signal peptide directing secretion. Q10 carries the post-translational modification Pyrrolidone carboxylic acid. Cystine bridges form between C20–C100, C53–C58, C106–C310, and C186–C218. N22 is a glycosylation site (N-linked (GlcNAc...) asparagine). H51 acts as the Proton acceptor in catalysis. Residues D52, V55, G57, D59, and S61 each coordinate Ca(2+). N66 is a glycosylation site (N-linked (GlcNAc...) asparagine). P148 contacts substrate. Residue H179 participates in heme b binding. Residue T180 coordinates Ca(2+). N195, N207, and N223 each carry an N-linked (GlcNAc...) asparagine glycan. Residues D231, T234, and D239 each contribute to the Ca(2+) site. N-linked (GlcNAc...) asparagine glycosylation is present at N264.

It belongs to the peroxidase family. Classical plant (class III) peroxidase subfamily. The cofactor is Ca(2+). Heme b is required as a cofactor.

The protein localises to the secreted. It localises to the vacuole. The catalysed reaction is 2 a phenolic donor + H2O2 = 2 a phenolic radical donor + 2 H2O. Functionally, removal of H(2)O(2), oxidation of toxic reductants, biosynthesis and degradation of lignin, suberization, auxin catabolism, response to environmental stresses such as wounding, pathogen attack and oxidative stress. These functions might be dependent on each isozyme/isoform in each plant tissue. This chain is Peroxidase C1C (PRXC1C), found in Armoracia rusticana (Horseradish).